The sequence spans 151 residues: Desiccation-related protein PCC27-45 (151 aa).

This sequence belongs to the LEA type 2 family.

The chain is Desiccation-related protein PCC27-45 from Craterostigma plantagineum (Blue gem).